The chain runs to 637 residues: Proton myo-inositol cotransporter (637 aa).

Residues 1 to 65 lie on the Cytoplasmic side of the membrane; the sequence is MSRKASEDVE…AARRQFQRDE (65 aa). Serine 6 is subject to Phosphoserine. A disordered region spans residues 16 to 38; it reads LSSLMGERRRRQPEPGAPGGERS. Phosphoserine is present on residues serine 44 and serine 47. Residues 66-86 form a helical membrane-spanning segment; that stretch reads TPAFVYAAAAFSALGGFLFGY. Topologically, residues 87–114 are extracellular; it reads DTGVVSGAMLLLRRQMRLGAMWQELLVS. A helical membrane pass occupies residues 115–135; it reads GAVGAAAVAALAGGALNGALG. The Cytoplasmic segment spans residues 136–137; it reads RR. Residues 138 to 158 form a helical membrane-spanning segment; sequence SAILLASALCTVGSAVLAAAA. Residues 159-167 are Extracellular-facing; it reads NKETLLAGR. The chain crosses the membrane as a helical span at residues 168 to 188; that stretch reads LVVGLGIGIASMTVPVYIAEV. Residues 189 to 201 lie on the Cytoplasmic side of the membrane; that stretch reads SPPNLRGRLVTIN. The helical transmembrane segment at 202–222 threads the bilayer; that stretch reads TLFITGGQFFASVVDGAFSYL. The Extracellular portion of the chain corresponds to 223-228; sequence QKDGWR. A helical membrane pass occupies residues 229–249; it reads YMLGLAAIPAVIQFLGFLFLP. Residues 250 to 313 are Cytoplasmic-facing; that stretch reads ESPRWLIQKG…RMLSYPPTRR (64 aa). A helical transmembrane segment spans residues 314-334; that stretch reads ALAVGCGLQMFQQLSGINTIM. Residues 335 to 352 are Extracellular-facing; that stretch reads YYSATILQMSGVEDDRLA. A helical transmembrane segment spans residues 353-373; it reads IWLASITAFTNFIFTLVGVWL. At 374 to 382 the chain is on the cytoplasmic side; that stretch reads VEKVGRRKL. Residues 383–403 form a helical membrane-spanning segment; it reads TFGSLAGTTVALTILALGFLL. Residues 404 to 497 lie on the Extracellular side of the membrane; that stretch reads SAQVSPRVTF…SFCPTPYSWT (94 aa). N-linked (GlcNAc...) asparagine glycans are attached at residues asparagine 422, asparagine 447, and asparagine 474. The helical transmembrane segment at 498–518 threads the bilayer; it reads ALVGLVLYLVFFAPGMGPMPW. Residues 519-538 are Cytoplasmic-facing; the sequence is TVNSEIYPLWARSTGNACSA. A helical membrane pass occupies residues 539–559; that stretch reads GINWIFNVLVSLTFLHTAEYL. Residues 560-562 are Extracellular-facing; the sequence is TYY. Residues 563–583 traverse the membrane as a helical segment; that stretch reads GAFFLYAGFAAVGLLFVYGCL. The Cytoplasmic portion of the chain corresponds to 584-637; it reads PETKGKKLEEIESLFDHRLCTCGTADSDEGRYIEYIRVKGSNYHLSDNDASDVE. Residues serine 629 and serine 634 each carry the phosphoserine modification.

Belongs to the major facilitator superfamily. Sugar transporter (TC 2.A.1.1) family.

It is found in the cell membrane. It catalyses the reaction myo-inositol(out) + H(+)(out) = myo-inositol(in) + H(+)(in). In terms of biological role, h(+)-myo-inositol cotransporter. Can also transport related stereoisomers. This Rattus norvegicus (Rat) protein is Proton myo-inositol cotransporter.